Consider the following 146-residue polypeptide: Small ribosomal subunit protein bS6 (146 aa).

The interval glycine 94–proline 146 is disordered. 2 stretches are compositionally biased toward basic and acidic residues: residues glycine 106–aspartate 115 and glutamate 134–proline 146.

It belongs to the bacterial ribosomal protein bS6 family.

Functionally, binds together with bS18 to 16S ribosomal RNA. This chain is Small ribosomal subunit protein bS6, found in Nitrosomonas europaea (strain ATCC 19718 / CIP 103999 / KCTC 2705 / NBRC 14298).